The following is a 290-amino-acid chain: MKPERNSLSEKIRNAEKIVIKVGSARLSGLPSEVNDFLFQLVSDIRHLRDLGKKVILVSSGAIARGRLLLSELPSTISSGDSLAEKQALAAMGQNRLVNLYDSFFSKVNLSIAQILFGVLDLESKEGYKNLKNTFTQLVEWGILPVVNENDSVATEEVKFGDNDMLSALVSLIVEADLLIILTGVDGFLKEEKVVPFLEKISKEDLGLAGGPSGPGTGGMFTKLKSAGLLSEAGIPTAILNGKKMHVIREFLEKNSIGTLVAPSGNRVFSEEDVKEIIRKNRNGNGGNSL.

K21 serves as a coordination point for ATP. Residues S60, D151, and N163 each contribute to the substrate site. 217-223 (TGGMFTK) contributes to the ATP binding site.

This sequence belongs to the glutamate 5-kinase family.

Its subcellular location is the cytoplasm. The catalysed reaction is L-glutamate + ATP = L-glutamyl 5-phosphate + ADP. Its pathway is amino-acid biosynthesis; L-proline biosynthesis; L-glutamate 5-semialdehyde from L-glutamate: step 1/2. In terms of biological role, catalyzes the transfer of a phosphate group to glutamate to form L-glutamate 5-phosphate. In Leptospira interrogans serogroup Icterohaemorrhagiae serovar copenhageni (strain Fiocruz L1-130), this protein is Glutamate 5-kinase.